Reading from the N-terminus, the 447-residue chain is Phosphoglucosamine mutase (447 aa).

The active-site Phosphoserine intermediate is S102. Residues S102, D241, D243, and D245 each contribute to the Mg(2+) site. Residue S102 is modified to Phosphoserine.

The protein belongs to the phosphohexose mutase family. Requires Mg(2+) as cofactor. Activated by phosphorylation.

It catalyses the reaction alpha-D-glucosamine 1-phosphate = D-glucosamine 6-phosphate. In terms of biological role, catalyzes the conversion of glucosamine-6-phosphate to glucosamine-1-phosphate. In Pseudoalteromonas atlantica (strain T6c / ATCC BAA-1087), this protein is Phosphoglucosamine mutase.